The chain runs to 387 residues: 3-hydroxy-D-aspartate aldolase (387 aa).

Lys-62 is subject to N6-(pyridoxal phosphate)lysine. Pyridoxal 5'-phosphate contacts are provided by residues Gln-85, Thr-238, 256–257, and Tyr-265; that span reads GS. Positions 355 and 357 each coordinate Mg(2+).

The protein belongs to the DSD1 family. As to quaternary structure, homodimer. Pyridoxal 5'-phosphate is required as a cofactor. The cofactor is Mg(2+).

The enzyme catalyses (3S)-3-hydroxy-D-aspartate = glyoxylate + glycine. It carries out the reaction (3R)-3-hydroxy-D-aspartate = glyoxylate + glycine. Its function is as follows. Catalyzes the condensation of glyoxylate and glycine into (2R,3S)-beta-hydroxyaspartate ((3S)-3-hydroxy-D-aspartate). Is essential for the growth of P.denitrificans in the presence of glycolate and glyoxylate since it functions in glyoxylate assimilation via the beta-hydroxyaspartate cycle (BHAC). Is also able to catalyze the reverse reaction in vitro, i.e. the cleavage of (3S)-3-hydroxy-D-aspartate, and that of D-threonine to a lesser extent. This is 3-hydroxy-D-aspartate aldolase from Paracoccus denitrificans (strain Pd 1222).